The primary structure comprises 189 residues: Peptide deformylase (189 aa).

Residues Cys-98 and His-140 each coordinate Fe cation. The active site involves Glu-141. His-144 contacts Fe cation.

This sequence belongs to the polypeptide deformylase family. Fe(2+) serves as cofactor.

It catalyses the reaction N-terminal N-formyl-L-methionyl-[peptide] + H2O = N-terminal L-methionyl-[peptide] + formate. Its function is as follows. Removes the formyl group from the N-terminal Met of newly synthesized proteins. Requires at least a dipeptide for an efficient rate of reaction. N-terminal L-methionine is a prerequisite for activity but the enzyme has broad specificity at other positions. This chain is Peptide deformylase, found in Porphyromonas gingivalis (strain ATCC 33277 / DSM 20709 / CIP 103683 / JCM 12257 / NCTC 11834 / 2561).